The following is a 135-amino-acid chain: Glutaredoxin-C3 (135 aa).

Residues 26 to 134 enclose the Glutaredoxin domain; that stretch reads VARVERLASE…PLLKEAGALW (109 aa). A disulfide bridge connects residues Cys-46 and Cys-49. The Responsive for interaction with TGA factors motif lies at 132-135; that stretch reads ALWL.

This sequence belongs to the glutaredoxin family. CC-type subfamily.

Its subcellular location is the cytoplasm. The protein resides in the nucleus. Has a glutathione-disulfide oxidoreductase activity in the presence of NADPH and glutathione reductase. Reduces low molecular weight disulfides and proteins. This is Glutaredoxin-C3 (GRXC3) from Oryza sativa subsp. japonica (Rice).